We begin with the raw amino-acid sequence, 346 residues long: Histidinol-phosphate aminotransferase (346 aa).

An N6-(pyridoxal phosphate)lysine modification is found at Lys209.

This sequence belongs to the class-II pyridoxal-phosphate-dependent aminotransferase family. Histidinol-phosphate aminotransferase subfamily. In terms of assembly, homodimer. It depends on pyridoxal 5'-phosphate as a cofactor.

The catalysed reaction is L-histidinol phosphate + 2-oxoglutarate = 3-(imidazol-4-yl)-2-oxopropyl phosphate + L-glutamate. The protein operates within amino-acid biosynthesis; L-histidine biosynthesis; L-histidine from 5-phospho-alpha-D-ribose 1-diphosphate: step 7/9. The protein is Histidinol-phosphate aminotransferase of Aliivibrio fischeri (strain ATCC 700601 / ES114) (Vibrio fischeri).